A 324-amino-acid chain; its full sequence is Glyoxylate/hydroxypyruvate reductase B (324 aa).

Residues arginine 237 and glutamate 266 contribute to the active site. Histidine 285 (proton donor) is an active-site residue.

Belongs to the D-isomer specific 2-hydroxyacid dehydrogenase family. GhrB subfamily. As to quaternary structure, homodimer.

It is found in the cytoplasm. The catalysed reaction is glycolate + NADP(+) = glyoxylate + NADPH + H(+). The enzyme catalyses (R)-glycerate + NAD(+) = 3-hydroxypyruvate + NADH + H(+). It carries out the reaction (R)-glycerate + NADP(+) = 3-hydroxypyruvate + NADPH + H(+). Functionally, catalyzes the NADPH-dependent reduction of glyoxylate and hydroxypyruvate into glycolate and glycerate, respectively. This Salmonella gallinarum (strain 287/91 / NCTC 13346) protein is Glyoxylate/hydroxypyruvate reductase B.